The chain runs to 98 residues: NADH-ubiquinone oxidoreductase chain 4L (98 aa).

3 helical membrane passes run 1-21, 29-49, and 61-81; these read MSLV…GLLM, SLLC…LTIL, and IILL…LVMV.

Belongs to the complex I subunit 4L family. In terms of assembly, core subunit of respiratory chain NADH dehydrogenase (Complex I) which is composed of 45 different subunits.

The protein resides in the mitochondrion inner membrane. The catalysed reaction is a ubiquinone + NADH + 5 H(+)(in) = a ubiquinol + NAD(+) + 4 H(+)(out). Core subunit of the mitochondrial membrane respiratory chain NADH dehydrogenase (Complex I) which catalyzes electron transfer from NADH through the respiratory chain, using ubiquinone as an electron acceptor. Part of the enzyme membrane arm which is embedded in the lipid bilayer and involved in proton translocation. This Muntiacus vuquangensis (Giant muntjac) protein is NADH-ubiquinone oxidoreductase chain 4L (MT-ND4L).